A 421-amino-acid chain; its full sequence is Bestrophin homolog 2 (421 aa).

The next 4 helical transmembrane spans lie at 28–48, 73–93, 239–259, and 275–295; these read IWKA…IISV, LSFI…VDRW, LMYP…SIIA, and VYFP…LKVI.

The protein belongs to the anion channel-forming bestrophin (TC 1.A.46) family. Calcium-sensitive chloride channel subfamily. Forms oligomers.

The protein localises to the cell membrane. In terms of biological role, forms chloride channels. The protein is Bestrophin homolog 2 (best-2) of Caenorhabditis elegans.